The following is a 277-amino-acid chain: Thiamine thiazole synthase (277 aa).

NAD(+) is bound by residues S36, G63, V126, and 152–154; that span reads HVD. Fe cation is bound by residues D154 and H169. Position 230 (M230) interacts with NAD(+). R240 contributes to the glycine binding site.

It belongs to the THI4 family. Homooctamer; tetramer of dimers. Fe(2+) is required as a cofactor.

The enzyme catalyses hydrogen sulfide + glycine + NAD(+) = ADP-5-ethyl-4-methylthiazole-2-carboxylate + nicotinamide + 3 H2O + H(+). It participates in cofactor biosynthesis; thiamine diphosphate biosynthesis. Functionally, involved in the biosynthesis of the thiazole moiety of thiamine. Catalyzes the conversion of NAD and glycine to adenosine diphosphate 5-(2-hydroxyethyl)-4-methylthiazole-2-carboxylate (ADT), an adenylated thiazole intermediate, using free sulfide as a source of sulfur. In Fervidobacterium nodosum (strain ATCC 35602 / DSM 5306 / Rt17-B1), this protein is Thiamine thiazole synthase.